Here is a 486-residue protein sequence, read N- to C-terminus: Malonate-semialdehyde dehydrogenase 1 (486 aa).

The NAD(+) site is built by Phe-154, Lys-178, Glu-181, Arg-182, and Ser-231. Catalysis depends on Cys-286, which acts as the Nucleophile. Glu-386 contributes to the NAD(+) binding site.

The protein belongs to the aldehyde dehydrogenase family. IolA subfamily. Homotetramer.

It catalyses the reaction 3-oxopropanoate + NAD(+) + CoA + H2O = hydrogencarbonate + acetyl-CoA + NADH + H(+). The catalysed reaction is 2-methyl-3-oxopropanoate + NAD(+) + CoA + H2O = propanoyl-CoA + hydrogencarbonate + NADH + H(+). The protein operates within polyol metabolism; myo-inositol degradation into acetyl-CoA; acetyl-CoA from myo-inositol: step 7/7. Functionally, catalyzes the oxidation of malonate semialdehyde (MSA) and methylmalonate semialdehyde (MMSA) into acetyl-CoA and propanoyl-CoA, respectively. Is involved in a myo-inositol catabolic pathway. Bicarbonate, and not CO2, is the end-product of the enzymatic reaction. The protein is Malonate-semialdehyde dehydrogenase 1 of Bacillus anthracis.